A 399-amino-acid chain; its full sequence is Elongation factor Tu (399 aa).

One can recognise a tr-type G domain in the interval 10–209 (KPHVNIGTIG…AVDSYIPTPT (200 aa)). The segment at 19–26 (GHVDHGKT) is G1. 19–26 (GHVDHGKT) serves as a coordination point for GTP. Thr-26 provides a ligand contact to Mg(2+). The G2 stretch occupies residues 60–64 (GITIA). A G3 region spans residues 81–84 (DCPG). GTP is bound by residues 81 to 85 (DCPGH) and 136 to 139 (NKAD). The segment at 136 to 139 (NKAD) is G4. The segment at 174–176 (SAL) is G5.

This sequence belongs to the TRAFAC class translation factor GTPase superfamily. Classic translation factor GTPase family. EF-Tu/EF-1A subfamily. In terms of assembly, monomer.

The protein resides in the cytoplasm. It catalyses the reaction GTP + H2O = GDP + phosphate + H(+). Its function is as follows. GTP hydrolase that promotes the GTP-dependent binding of aminoacyl-tRNA to the A-site of ribosomes during protein biosynthesis. This Campylobacter jejuni (strain RM1221) protein is Elongation factor Tu.